The sequence spans 117 residues: UPF0102 protein YPN_3432 (117 aa).

This sequence belongs to the UPF0102 family.

This chain is UPF0102 protein YPN_3432, found in Yersinia pestis bv. Antiqua (strain Nepal516).